The sequence spans 330 residues: RNA polymerase sigma factor RpoS (330 aa).

The interval 56–89 (DATQLYLGEIGYSPLLTAEEEVYFARRALRGDVA) is sigma-70 factor domain-1. Residues 94–164 (MIESNLRLVV…ERAIMNQTRT (71 aa)) form a sigma-70 factor domain-2 region. The short motif at 118-121 (DLIE) is the Interaction with polymerase core subunit RpoC element. The interval 174-249 (ELNVYLRTAR…DEKENGPEDT (76 aa)) is sigma-70 factor domain-3. Residues 262–315 (WLFELNAKQREVLARRFGLLGYEAATLEDVGREIGLTRERVRQIQVEGLRRLRE) are sigma-70 factor domain-4. The segment at residues 288 to 307 (LEDVGREIGLTRERVRQIQV) is a DNA-binding region (H-T-H motif).

The protein belongs to the sigma-70 factor family. RpoS subfamily. In terms of assembly, interacts with the RNA polymerase core enzyme.

The protein resides in the cytoplasm. Functionally, sigma factors are initiation factors that promote the attachment of RNA polymerase to specific initiation sites and are then released. This sigma factor is the master transcriptional regulator of the stationary phase and the general stress response. In Shigella flexneri, this protein is RNA polymerase sigma factor RpoS.